A 506-amino-acid polypeptide reads, in one-letter code: Histidine ammonia-lyase (506 aa).

The 5-imidazolinone (Ala-Gly) cross-link spans 144–146 (ASG). At S145 the chain carries 2,3-didehydroalanine (Ser).

This sequence belongs to the PAL/histidase family. In terms of processing, contains an active site 4-methylidene-imidazol-5-one (MIO), which is formed autocatalytically by cyclization and dehydration of residues Ala-Ser-Gly.

The protein resides in the cytoplasm. The catalysed reaction is L-histidine = trans-urocanate + NH4(+). Its pathway is amino-acid degradation; L-histidine degradation into L-glutamate; N-formimidoyl-L-glutamate from L-histidine: step 1/3. The chain is Histidine ammonia-lyase from Legionella pneumophila subsp. pneumophila (strain Philadelphia 1 / ATCC 33152 / DSM 7513).